The sequence spans 401 residues: Phosphoglycerate kinase, cytosolic (401 aa).

11 residues coordinate (2R)-3-phosphoglycerate: valine 24, aspartate 25, asparagine 27, arginine 41, serine 63, histidine 64, glycine 66, arginine 67, arginine 122, histidine 154, and arginine 155. Glycine 200 provides a ligand contact to ADP. Residue glycine 200 participates in CDP binding. Residues lysine 202 and lysine 206 each coordinate AMP. Residue lysine 206 participates in ATP binding. Residue glycine 224 coordinates ADP. Glycine 224 contributes to the CDP binding site. Positions 225 and 297 each coordinate AMP. ATP-binding residues include glycine 225 and glycine 297. CDP contacts are provided by glycine 322 and phenylalanine 327. Phenylalanine 327 lines the ADP pocket. AMP is bound at residue glutamate 328. Glutamate 328, aspartate 359, and serine 360 together coordinate ATP. Aspartate 359 contributes to the Mg(2+) binding site.

The protein belongs to the phosphoglycerate kinase family. Monomer. Requires Mg(2+) as cofactor.

The protein localises to the cytoplasm. The enzyme catalyses (2R)-3-phosphoglycerate + ATP = (2R)-3-phospho-glyceroyl phosphate + ADP. Its pathway is carbohydrate degradation; glycolysis; pyruvate from D-glyceraldehyde 3-phosphate: step 2/5. The protein is Phosphoglycerate kinase, cytosolic of Nicotiana tabacum (Common tobacco).